A 170-amino-acid polypeptide reads, in one-letter code: uncharacterized protein (170 aa).

Positions 35 to 57 (EEVMPATAPSTDPAVPKDAQEAD) are disordered.

This is an uncharacterized protein from Candida tsukubaensis (Yeast).